A 491-amino-acid polypeptide reads, in one-letter code: Ketol-acid reductoisomerase (NADP(+)) (491 aa).

Residues 14–208 (LKHLGKCRFM…GSHRAGVLES (195 aa)) form the KARI N-terminal Rossmann domain. Residues 45-48 (CGSQ), Arg68, and Ser78 contribute to the NADP(+) site. His132 is an active-site residue. Gly158 is an NADP(+) binding site. KARI C-terminal knotted domains lie at 209-344 (SFVA…QAPN) and 345-485 (YQQE…MQNM). Asp217, Glu221, Glu389, and Glu393 together coordinate Mg(2+). Substrate is bound at residue Ser414.

Belongs to the ketol-acid reductoisomerase family. The cofactor is Mg(2+).

The catalysed reaction is (2R)-2,3-dihydroxy-3-methylbutanoate + NADP(+) = (2S)-2-acetolactate + NADPH + H(+). It carries out the reaction (2R,3R)-2,3-dihydroxy-3-methylpentanoate + NADP(+) = (S)-2-ethyl-2-hydroxy-3-oxobutanoate + NADPH + H(+). The protein operates within amino-acid biosynthesis; L-isoleucine biosynthesis; L-isoleucine from 2-oxobutanoate: step 2/4. It functions in the pathway amino-acid biosynthesis; L-valine biosynthesis; L-valine from pyruvate: step 2/4. Involved in the biosynthesis of branched-chain amino acids (BCAA). Catalyzes an alkyl-migration followed by a ketol-acid reduction of (S)-2-acetolactate (S2AL) to yield (R)-2,3-dihydroxy-isovalerate. In the isomerase reaction, S2AL is rearranged via a Mg-dependent methyl migration to produce 3-hydroxy-3-methyl-2-ketobutyrate (HMKB). In the reductase reaction, this 2-ketoacid undergoes a metal-dependent reduction by NADPH to yield (R)-2,3-dihydroxy-isovalerate. The sequence is that of Ketol-acid reductoisomerase (NADP(+)) from Blochmanniella pennsylvanica (strain BPEN).